Here is a 381-residue protein sequence, read N- to C-terminus: Putative acyl-CoA dehydrogenase YdbM (381 aa).

Residues 158–160 and 337–341 each bind FAD; these read FTT and RIVGA.

This sequence belongs to the acyl-CoA dehydrogenase family. Requires FAD as cofactor.

In Bacillus subtilis (strain 168), this protein is Putative acyl-CoA dehydrogenase YdbM (ydbM).